We begin with the raw amino-acid sequence, 417 residues long: Serine hydroxymethyltransferase (417 aa).

Residues L121 and 125–127 (GHL) contribute to the (6S)-5,6,7,8-tetrahydrofolate site. K229 is subject to N6-(pyridoxal phosphate)lysine. 355 to 357 (SPF) is a (6S)-5,6,7,8-tetrahydrofolate binding site.

This sequence belongs to the SHMT family. In terms of assembly, homodimer. It depends on pyridoxal 5'-phosphate as a cofactor.

It localises to the cytoplasm. The enzyme catalyses (6R)-5,10-methylene-5,6,7,8-tetrahydrofolate + glycine + H2O = (6S)-5,6,7,8-tetrahydrofolate + L-serine. The protein operates within one-carbon metabolism; tetrahydrofolate interconversion. It participates in amino-acid biosynthesis; glycine biosynthesis; glycine from L-serine: step 1/1. Catalyzes the reversible interconversion of serine and glycine with tetrahydrofolate (THF) serving as the one-carbon carrier. This reaction serves as the major source of one-carbon groups required for the biosynthesis of purines, thymidylate, methionine, and other important biomolecules. Also exhibits THF-independent aldolase activity toward beta-hydroxyamino acids, producing glycine and aldehydes, via a retro-aldol mechanism. The protein is Serine hydroxymethyltransferase of Salmonella arizonae (strain ATCC BAA-731 / CDC346-86 / RSK2980).